Reading from the N-terminus, the 373-residue chain is Transaldolase (373 aa).

Catalysis depends on Lys143, which acts as the Schiff-base intermediate with substrate.

This sequence belongs to the transaldolase family. Type 2 subfamily.

It localises to the cytoplasm. It carries out the reaction D-sedoheptulose 7-phosphate + D-glyceraldehyde 3-phosphate = D-erythrose 4-phosphate + beta-D-fructose 6-phosphate. It functions in the pathway carbohydrate degradation; pentose phosphate pathway; D-glyceraldehyde 3-phosphate and beta-D-fructose 6-phosphate from D-ribose 5-phosphate and D-xylulose 5-phosphate (non-oxidative stage): step 2/3. Its function is as follows. Transaldolase is important for the balance of metabolites in the pentose-phosphate pathway. The sequence is that of Transaldolase from Mycolicibacterium paratuberculosis (strain ATCC BAA-968 / K-10) (Mycobacterium paratuberculosis).